Consider the following 226-residue polypeptide: B-cell antigen receptor complex-associated protein alpha chain (226 aa).

The first 32 residues, 1-32, serve as a signal peptide directing secretion; it reads MPGGPGVLQALPATIFLLFLLSAVYLGPGCQA. One can recognise an Ig-like C2-type domain in the interval 33 to 116; the sequence is LWMHKVPASL…RVQEGNESYQ (84 aa). At 33-143 the chain is on the extracellular side; it reads LWMHKVPASL…LDMGEGTKNR (111 aa). A disulfide bridge links Cys-54 with Cys-106. Asn-57, Asn-63, Asn-73, Asn-88, Asn-97, and Asn-112 each carry an N-linked (GlcNAc...) asparagine glycan. The helical transmembrane segment at 144–165 threads the bilayer; it reads IITAEGIILLFCAVVPGTLLLF. Over 166 to 226 the chain is Cytoplasmic; that stretch reads RKRWQNEKLG…NIGDVQLEKP (61 aa). In terms of domain architecture, ITAM spans 177–205; it reads DAGDEYEDENLYEGLNLDDCSMYEDISRG. Tyr-188 and Tyr-199 each carry phosphotyrosine; by SRC-type Tyr-kinases. The residue at position 204 (Arg-204) is an Asymmetric dimethylarginine; by PRMT1. At Tyr-210 the chain carries Phosphotyrosine; by Tyr-kinases.

Heterodimer of alpha and beta chains; disulfide-linked. Part of the B-cell antigen receptor complex where the alpha/beta chain heterodimer is non-covalently associated with an antigen-specific membrane-bound surface immunoglobulin of two heavy chains and two light chains. Interacts through its phosphorylated ITAM domain with the SH2 domains of SYK which stimulates SYK autophosphorylation and activation. Also interacts, when phosphorylated on Tyr-210, with the SH2 domain of BLNK/SLP65, bringing BLNK into proximity with SYK and allowing SYK to phosphorylate BLNK which is necessary for trafficking of the BCR to late endosomes. Interacts with Src-family tyrosine kinases including FYN and LYN, increasing their activity. Phosphorylated on tyrosine, serine and threonine residues upon B-cell activation. Phosphorylation of tyrosine residues by Src-family kinases is an early and essential feature of the BCR signaling cascade. The phosphorylated tyrosines serve as docking sites for SH2-domain containing kinases, leading to their activation which in turn leads to phosphorylation of downstream targets. Phosphorylated by LYN. Phosphorylation of serine and threonine residues may prevent subsequent tyrosine phosphorylation. In terms of processing, arginine methylation in the ITAM domain may interfere with the binding of SYK. It promotes signals leading to B-cell differentiation. B-cells.

It is found in the cell membrane. Required in cooperation with CD79B for initiation of the signal transduction cascade activated by binding of antigen to the B-cell antigen receptor complex (BCR) which leads to internalization of the complex, trafficking to late endosomes and antigen presentation. Also required for BCR surface expression and for efficient differentiation of pro- and pre-B-cells. Stimulates SYK autophosphorylation and activation. Binds to BLNK, bringing BLNK into proximity with SYK and allowing SYK to phosphorylate BLNK. Also interacts with and increases activity of some Src-family tyrosine kinases. Represses BCR signaling during development of immature B-cells. The chain is B-cell antigen receptor complex-associated protein alpha chain (CD79A) from Homo sapiens (Human).